A 177-amino-acid polypeptide reads, in one-letter code: Protein CutA 1, chloroplastic (177 aa).

The transit peptide at 1 to 60 directs the protein to the chloroplast; it reads MPLLPSPLGSLSAAATAAPRRAAAAAGLSPLLLRRRAPIAGALLFLSLGAFAGVRSLSSS.

It belongs to the CutA family. Homotrimer.

The protein resides in the plastid. Its subcellular location is the chloroplast. The chain is Protein CutA 1, chloroplastic (CUTA1) from Oryza sativa subsp. japonica (Rice).